Reading from the N-terminus, the 186-residue chain is Peptidoglycan-recognition protein SD (186 aa).

Positions 1-18 (MTWIGLLIVGLTAIAVQG) are cleaved as a signal peptide. The region spanning 47-169 (AVIAHTAGGA…RQVSATMSPG (123 aa)) is the N-acetylmuramoyl-L-alanine amidase domain. Residues Cys57 and Cys63 are joined by a disulfide bond. Residue Asn181 is glycosylated (N-linked (GlcNAc...) asparagine).

Belongs to the N-acetylmuramoyl-L-alanine amidase 2 family.

Its subcellular location is the secreted. In terms of biological role, peptidoglycan-recognition protein that plays a key role in innate immunity by binding to peptidoglycans (PGN) of Gram-positive bacteria and activating the Toll pathway. Has no activity against on Gram-negative bacteria and fungi. Shows some partial redundancy with PRPGP-SA in Gram-positive bacteria recognition. May act by activating the proteolytic cleavage of Spatzle and the subsequent activation of Toll pathway. Recognizes S.aureus PGN. The protein is Peptidoglycan-recognition protein SD (PGRP-SD) of Drosophila simulans (Fruit fly).